The primary structure comprises 407 residues: Imidazolonepropionase (407 aa).

Fe(3+) is bound by residues His74 and His76. Residues His74 and His76 each coordinate Zn(2+). Positions 83, 146, and 179 each coordinate 4-imidazolone-5-propanoate. Tyr146 contacts N-formimidoyl-L-glutamate. His244 lines the Fe(3+) pocket. His244 contacts Zn(2+). Gln247 contacts 4-imidazolone-5-propanoate. Asp319 is a binding site for Fe(3+). Asp319 lines the Zn(2+) pocket. Residues Asn321 and Gly323 each contribute to the N-formimidoyl-L-glutamate site. 4-imidazolone-5-propanoate is bound at residue Thr324.

It belongs to the metallo-dependent hydrolases superfamily. HutI family. Zn(2+) is required as a cofactor. Fe(3+) serves as cofactor.

The protein resides in the cytoplasm. The catalysed reaction is 4-imidazolone-5-propanoate + H2O = N-formimidoyl-L-glutamate. Its pathway is amino-acid degradation; L-histidine degradation into L-glutamate; N-formimidoyl-L-glutamate from L-histidine: step 3/3. Its function is as follows. Catalyzes the hydrolytic cleavage of the carbon-nitrogen bond in imidazolone-5-propanoate to yield N-formimidoyl-L-glutamate. It is the third step in the universal histidine degradation pathway. In Salmonella enteritidis PT4 (strain P125109), this protein is Imidazolonepropionase.